A 289-amino-acid chain; its full sequence is Syntaxin-3 (289 aa).

The Cytoplasmic segment spans residues Met-1 to Lys-263. Positions Met-32–Ala-111 form a coiled coil. A t-SNARE coiled-coil homology domain is found at Leu-191–Ala-253. A helical; Anchor for type IV membrane protein transmembrane segment spans residues Leu-264 to Leu-284. At Ser-285–Lys-289 the chain is on the extracellular side.

Belongs to the syntaxin family. As to quaternary structure, interacts with REEP6. Interacts with PRPH2 in rod and cone photoreceptors. Interacts with ROM1. Interacts with SNAP25. Interacts with VAMP2. In terms of tissue distribution, heart, spleen, lung and kidney.

It is found in the membrane. Potentially involved in docking of synaptic vesicles at presynaptic active zones. Apical receptor involved in membrane fusion of apical vesicles. Essential for survival of retinal photoreceetors. This chain is Syntaxin-3 (Stx3), found in Rattus norvegicus (Rat).